The sequence spans 275 residues: Large ribosomal subunit protein uL2 (275 aa).

Disordered regions lie at residues 28–54 (APHA…TRHI) and 223–275 (VAMN…RNKK).

The protein belongs to the universal ribosomal protein uL2 family. As to quaternary structure, part of the 50S ribosomal subunit. Forms a bridge to the 30S subunit in the 70S ribosome.

In terms of biological role, one of the primary rRNA binding proteins. Required for association of the 30S and 50S subunits to form the 70S ribosome, for tRNA binding and peptide bond formation. It has been suggested to have peptidyltransferase activity; this is somewhat controversial. Makes several contacts with the 16S rRNA in the 70S ribosome. This is Large ribosomal subunit protein uL2 from Saccharophagus degradans (strain 2-40 / ATCC 43961 / DSM 17024).